We begin with the raw amino-acid sequence, 2131 residues long: Beta/gamma crystallin domain-containing protein 1 (2131 aa).

Disordered regions lie at residues 1–53 (MPLS…LPAP), 104–370 (KSRA…KGHA), 385–674 (TEGA…PVHK), 688–707 (RTNSSPRHTDIRGQRNTPAS), and 723–743 (AKEMEQPEKKVMPNSPQNGVL). A compositionally biased stretch (basic residues) spans 19-35 (PPKKHTTFHLWRSKKKQ). A compositionally biased stretch (polar residues) spans 135–147 (RNGLESPTRSNAK). Basic and acidic residues-rich tracts occupy residues 160–169 (LPERESERSR) and 184–194 (GSPRENPREAE). A compositionally biased stretch (polar residues) spans 248–265 (ATTTAKQLHSSPGNSSRQ). Over residues 414 to 424 (SGRRSGRRRGS) the composition is skewed to basic residues. The segment covering 479 to 490 (ASAASPESKPSP) has biased composition (low complexity). Ser483 and Ser489 each carry phosphoserine. 2 stretches are compositionally biased toward basic and acidic residues: residues 536–546 (PAKESPPKRVP) and 562–572 (EAARAIPRELP). A compositionally biased stretch (low complexity) spans 609–619 (RAAGAPGASDA). Positions 723-733 (AKEMEQPEKKV) are enriched in basic and acidic residues. A phosphoserine mark is found at Ser737 and Ser756. 2 disordered regions span residues 758 to 791 (EEILPATRGMNGDSSENQALGPQPNQDDKADVQT) and 837 to 889 (DIPT…KDTC). Residues 769–782 (GDSSENQALGPQPN) are compositionally biased toward polar residues. The span at 864-881 (SPAESSPGPSLSLSAPAP) shows a compositional bias: low complexity. Ser892 carries the phosphoserine modification. Disordered stretches follow at residues 926-947 (LELGGETTPPLSTERSPEAVGS), 1041-1101 (QAQS…VFDS), 1271-1302 (STSQNGSLSQSSVSQPTTEGAPPCGLNKEQSN), and 1316-1348 (SSSTSHSSLKSPSHMEKYPQKEKTKEDLDSRSN). Phosphothreonine is present on Thr933. A compositionally biased stretch (polar residues) spans 1055-1089 (SSPTNSPSSGNHLATPQRPDQTVTNGQDSPASLLN). 3 stretches are compositionally biased toward low complexity: residues 1091–1101 (SAGSDDSVFDS), 1271–1288 (STSQNGSLSQSSVSQPTT), and 1316–1327 (SSSTSHSSLKSP). The span at 1328 to 1348 (SHMEKYPQKEKTKEDLDSRSN) shows a compositional bias: basic and acidic residues. Beta/gamma crystallin 'Greek key' domains are found at residues 1430 to 1469 (GKVVIYSEPDVSEKCIEVFSDIQDCSSWSLSPVILIKVVR), 1470 to 1525 (GCWI…RHVV), 1531 to 1571 (SHID…KVHW), 1572 to 1614 (GTWL…RPLK), 1626 to 1678 (PKVV…KVLR), 1679 to 1721 (GIWV…RPIL), 1727 to 1769 (AHMI…NVLS), 1770 to 1812 (GVWV…QPIC), 1823 to 1860 (NQIHLFSEPQFQGHSQSFEETTSQIDDSFSTKSCRVSG), 1861 to 1904 (GSWV…RFID), 1910 to 1950 (PTII…QVIG), and 1951 to 1992 (GIWV…RPFV). Residues 1994 to 2127 (KRIYFRLRNK…EKFTQVWEAM (134 aa)) form the Ricin B-type lectin domain.

Belongs to the beta/gamma-crystallin family.

Functionally, may function as suppressor of malignant melanoma. It may exert its effects through interactions with the cytoskeleton. This Homo sapiens (Human) protein is Beta/gamma crystallin domain-containing protein 1.